The primary structure comprises 74 residues: DNA-directed RNA polymerase subunit omega (74 aa).

This sequence belongs to the RNA polymerase subunit omega family. In terms of assembly, the RNAP catalytic core consists of 2 alpha, 1 beta, 1 beta' and 1 omega subunit. When a sigma factor is associated with the core the holoenzyme is formed, which can initiate transcription.

The enzyme catalyses RNA(n) + a ribonucleoside 5'-triphosphate = RNA(n+1) + diphosphate. Promotes RNA polymerase assembly. Latches the N- and C-terminal regions of the beta' subunit thereby facilitating its interaction with the beta and alpha subunits. This chain is DNA-directed RNA polymerase subunit omega, found in Solidesulfovibrio magneticus (strain ATCC 700980 / DSM 13731 / RS-1) (Desulfovibrio magneticus).